We begin with the raw amino-acid sequence, 695 residues long: GRB2-associated-binding protein 1 (695 aa).

N-acetylserine is present on S2. Residues E5–G116 enclose the PH domain. Residues A204 to K229 form a disordered region. The span at P206 to K229 shows a compositional bias: polar residues. Phosphoserine is present on residues S251, S253, S266, and S304. Positions S306–N387 are disordered. Positions G314–L334 are enriched in polar residues. Phosphothreonine is present on T388. S403 and S455 each carry phosphoserine. The interval P453–D659 is disordered. Polar residues-rich tracts occupy residues P457–E466 and F605–M617. Y628 carries the post-translational modification Phosphotyrosine. At T639 the chain carries Phosphothreonine. A Phosphoserine modification is found at S652. Y660 carries the post-translational modification Phosphotyrosine. Residues L671 to K695 are disordered. The segment covering S673 to T685 has biased composition (basic and acidic residues). At S684 the chain carries Phosphoserine. Residues E686–K695 are compositionally biased toward polar residues.

The protein belongs to the GAB family. As to quaternary structure, identified in a complex containing FRS2, GRB2, GAB1, PIK3R1 and SOS1. Forms a tripartite complex containing GAB1, METTL13 and SPRY2. Within the complex interacts with METTL13. Interacts with GRB2 and with other SH2-containing proteins. Interacts with phosphorylated LAT2. Interacts with PTPRJ. Interacts (phosphorylated) with PTPN11. Interacts with HCK. Post-translationally, phosphorylated on tyrosine residue(s) by the epidermal growth factor receptor (EGFR) and the insulin receptor (INSR). Tyrosine phosphorylation of GAB1 mediates interaction with several proteins that contain SH2 domains. Phosphorylated on tyrosine residues by HCK upon IL6 signaling. Phosphorylated in response to FGFR1 activation. Expressed in the inner ear (at protein level). Expression is detected in the cochlear duct, spiral limbus region, efferent and afferent nerves, and in spiral ganglion neurons (at protein level).

Functionally, adapter protein that plays a role in intracellular signaling cascades triggered by activated receptor-type kinases. Plays a role in FGFR1 signaling. Probably involved in signaling by the epidermal growth factor receptor (EGFR) and the insulin receptor (INSR). Involved in the MET/HGF-signaling pathway. The protein is GRB2-associated-binding protein 1 (Gab1) of Mus musculus (Mouse).